The primary structure comprises 140 residues: NADPH-dependent 7-cyano-7-deazaguanine reductase (140 aa).

The active-site Thioimide intermediate is the Cys-51. Asp-58 functions as the Proton donor in the catalytic mechanism. Residues 73–75 (LES) and 92–93 (HE) contribute to the substrate site.

It belongs to the GTP cyclohydrolase I family. QueF type 1 subfamily.

The protein localises to the cytoplasm. The enzyme catalyses 7-aminomethyl-7-carbaguanine + 2 NADP(+) = 7-cyano-7-deazaguanine + 2 NADPH + 3 H(+). It functions in the pathway tRNA modification; tRNA-queuosine biosynthesis. In terms of biological role, catalyzes the NADPH-dependent reduction of 7-cyano-7-deazaguanine (preQ0) to 7-aminomethyl-7-deazaguanine (preQ1). In Syntrophus aciditrophicus (strain SB), this protein is NADPH-dependent 7-cyano-7-deazaguanine reductase.